The sequence spans 367 residues: Terpene cyclase verU1 (367 aa).

A helical membrane pass occupies residues 8 to 28; that stretch reads IRCSLLLLGLVGIYTVWISSF. Residue Asn-50 is glycosylated (N-linked (GlcNAc...) asparagine). Helical transmembrane passes span 57–77, 85–105, 120–140, 169–189, 197–217, 239–259, 292–312, and 327–347; these read FTGI…YWPV, LSLI…LFAL, MAMF…PIYC, CLLG…PAVV, IIAL…LTHL, ISAM…SLLA, FQWD…GLHI, and LIPE…AALY. An N-linked (GlcNAc...) asparagine glycan is attached at Asn-352.

This sequence belongs to the membrane-bound ascI terpene cyclase family.

It is found in the membrane. The protein operates within secondary metabolite biosynthesis; terpenoid biosynthesis. Its pathway is mycotoxin biosynthesis. In terms of biological role, terpene cyclase; part of the gene cluster that mediates the biosynthesis of the neurotoxin verrucosidin, a methylated alpha-pyrone polyketide that inhibits oxidative phosphorylation in mitochondria and thereby causes neurological diseases. The carbon backbone of verrucosidin is synthesized by the HR-PKS verA, and further modified by the other verrucodidin cluster enzymes. This Penicillium polonicum protein is Terpene cyclase verU1.